Consider the following 474-residue polypeptide: Coiled-coil domain-containing protein 149 (474 aa).

2 coiled-coil regions span residues Met1–Ser199 and Ile259–Ser286. Disordered regions lie at residues Ser301–Val388 and Ala405–Thr474. Basic and acidic residues predominate over residues Thr323–Gln337. The span at Cys343–Glu353 shows a compositional bias: low complexity. Residues Glu385–Ser414 adopt a coiled-coil conformation.

This sequence belongs to the CCDC149 family.

This is Coiled-coil domain-containing protein 149 (CCDC149) from Homo sapiens (Human).